The primary structure comprises 778 residues: Acyl-homoserine lactone acylase PvdQ (778 aa).

The signal sequence occupies residues 1–25; that stretch reads MTISRQFTGLTLAGLFLGLSLSAQA. Residues 196-218 constitute a propeptide, spacer peptide; it reads IENNARAYQLADTRLQRFALDRG. The active-site Nucleophile is S219.

The protein belongs to the peptidase S45 family. As to quaternary structure, heterodimer of an alpha subunit and a beta subunit processed from the same precursor.

It localises to the periplasm. It carries out the reaction an N-acyl-L-homoserine lactone + H2O = L-homoserine lactone + a carboxylate. Functionally, catalyzes the deacylation of acyl-homoserine lactone (AHL or acyl-HSL), releasing homoserine lactone (HSL) and the corresponding fatty acid. Possesses a specificity for the degradation of long-chain acyl-HSLs (side chains of 11 to 14 carbons in length). This is Acyl-homoserine lactone acylase PvdQ (pvdQ) from Pseudomonas fluorescens (strain Pf0-1).